We begin with the raw amino-acid sequence, 352 residues long: Histidinol-phosphate aminotransferase (352 aa).

Residue lysine 221 is modified to N6-(pyridoxal phosphate)lysine.

It belongs to the class-II pyridoxal-phosphate-dependent aminotransferase family. Histidinol-phosphate aminotransferase subfamily. As to quaternary structure, homodimer. Requires pyridoxal 5'-phosphate as cofactor.

The enzyme catalyses L-histidinol phosphate + 2-oxoglutarate = 3-(imidazol-4-yl)-2-oxopropyl phosphate + L-glutamate. Its pathway is amino-acid biosynthesis; L-histidine biosynthesis; L-histidine from 5-phospho-alpha-D-ribose 1-diphosphate: step 7/9. This is Histidinol-phosphate aminotransferase from Staphylococcus aureus (strain Mu3 / ATCC 700698).